The primary structure comprises 149 residues: Nucleoside diphosphate kinase (149 aa).

Lys9, Phe57, Arg85, Thr91, Arg102, and Asn112 together coordinate ATP. The Pros-phosphohistidine intermediate role is filled by His115.

It belongs to the NDK family. The cofactor is Mg(2+).

Its subcellular location is the cytoplasm. The catalysed reaction is a 2'-deoxyribonucleoside 5'-diphosphate + ATP = a 2'-deoxyribonucleoside 5'-triphosphate + ADP. The enzyme catalyses a ribonucleoside 5'-diphosphate + ATP = a ribonucleoside 5'-triphosphate + ADP. Its function is as follows. Major role in the synthesis of nucleoside triphosphates other than ATP. The ATP gamma phosphate is transferred to the NDP beta phosphate via a ping-pong mechanism, using a phosphorylated active-site intermediate. The chain is Nucleoside diphosphate kinase from Methanocorpusculum labreanum (strain ATCC 43576 / DSM 4855 / Z).